The chain runs to 529 residues: Meiosis 1 arrest protein (529 aa).

2 disordered regions span residues 180–201 (KGIQ…DESS) and 504–529 (AASK…PSHT). Residues 188–200 (SPSPTEEPSNDES) show a composition bias toward polar residues. Phosphoserine is present on Ser-516.

Expressed in germ cells of the testis. Expressed from spermatogonia to spermatids. Expressed at very low levels in lung, stomach, thymus. Not detected in Sertoli cells.

The protein localises to the cytoplasm. Required for meiosis I progression during spermatogenesis. The sequence is that of Meiosis 1 arrest protein (M1ap) from Mus musculus (Mouse).